We begin with the raw amino-acid sequence, 120 residues long: MITKADKNATRKKRHARVRAKLTGTAERPRLNVFRSNQHIYAQVIDDVNGVTLVSASTLDKDLALNGTSNIEAATKVGESVAKRAVEXGVKEVVFDRGGYLYHGRVKALAEAAREAGLQF.

It belongs to the universal ribosomal protein uL18 family. As to quaternary structure, part of the 50S ribosomal subunit; part of the 5S rRNA/L5/L18/L25 subcomplex. Contacts the 5S and 23S rRNAs.

Its function is as follows. This is one of the proteins that bind and probably mediate the attachment of the 5S RNA into the large ribosomal subunit, where it forms part of the central protuberance. The polypeptide is Large ribosomal subunit protein uL18 (Bacillus cereus (strain AH820)).